Reading from the N-terminus, the 304-residue chain is Glucose-6-phosphate isomerase (304 aa).

Glu146 acts as the Proton donor in catalysis. His177 is a catalytic residue.

This sequence belongs to the GPI family.

The protein resides in the cytoplasm. The enzyme catalyses alpha-D-glucose 6-phosphate = beta-D-fructose 6-phosphate. It participates in carbohydrate degradation; glycolysis; D-glyceraldehyde 3-phosphate and glycerone phosphate from D-glucose: step 2/4. The polypeptide is Glucose-6-phosphate isomerase (PGI) (Calanus finmarchicus (Calanus tonsus)).